Consider the following 103-residue polypeptide: N(4)-acetylcytidine amidohydrolase (103 aa).

One can recognise an ASCH domain in the interval I6–K101. The active-site Proton acceptor is K21. T24 serves as the catalytic Nucleophile. E74 (proton donor) is an active-site residue.

This sequence belongs to the N(4)-acetylcytidine amidohydrolase family.

It catalyses the reaction N(4)-acetylcytidine + H2O = cytidine + acetate + H(+). The enzyme catalyses N(4)-acetyl-2'-deoxycytidine + H2O = 2'-deoxycytidine + acetate + H(+). The catalysed reaction is N(4)-acetylcytosine + H2O = cytosine + acetate + H(+). In terms of biological role, catalyzes the hydrolysis of N(4)-acetylcytidine (ac4C). The sequence is that of N(4)-acetylcytidine amidohydrolase (yqfB) from Escherichia coli (strain SMS-3-5 / SECEC).